An 86-amino-acid chain; its full sequence is Large ribosomal subunit protein bL31 (86 aa).

The disordered stretch occupies residues Y65–K86. A compositionally biased stretch (basic and acidic residues) spans K76–K86.

This sequence belongs to the bacterial ribosomal protein bL31 family. Type A subfamily. As to quaternary structure, part of the 50S ribosomal subunit.

Functionally, binds the 23S rRNA. This is Large ribosomal subunit protein bL31 from Prochlorococcus marinus (strain AS9601).